The primary structure comprises 573 residues: 2-isopropylmalate synthase (573 aa).

The region spanning 37–314 is the Pyruvate carboxyltransferase domain; sequence PRWLSTDLRD…DPQIDFSDID (278 aa). Asp46, His253, His255, and Asn289 together coordinate Mg(2+). Residues 456–573 form a regulatory domain region; that stretch reads NPDNPWGRIQ…VVSAVNRATR (118 aa).

Belongs to the alpha-IPM synthase/homocitrate synthase family. LeuA type 2 subfamily. In terms of assembly, homodimer. It depends on Mg(2+) as a cofactor.

It localises to the cytoplasm. The enzyme catalyses 3-methyl-2-oxobutanoate + acetyl-CoA + H2O = (2S)-2-isopropylmalate + CoA + H(+). Its pathway is amino-acid biosynthesis; L-leucine biosynthesis; L-leucine from 3-methyl-2-oxobutanoate: step 1/4. Catalyzes the condensation of the acetyl group of acetyl-CoA with 3-methyl-2-oxobutanoate (2-ketoisovalerate) to form 3-carboxy-3-hydroxy-4-methylpentanoate (2-isopropylmalate). The chain is 2-isopropylmalate synthase from Streptomyces coelicolor (strain ATCC BAA-471 / A3(2) / M145).